The chain runs to 516 residues: MNEKIIIFDTTLRDGEQALLTSLTSNEKIQIALALERLGVDVIEVGFPVSSPGDFKSVQMLSKIIKNSKICSLARCLPNDITIAADAMQFSKNFRIHLFLGTSDLHVSSKLKKNFNEIIEMAVASVKQAKKFTNDIEFSCEDAGRTTLQNLYCIIEAVIKAGATTVNIPDTVGYTTPTQFKKIITMLFNHVKNIHQAIISVHCHNDLGMAVANSISAVEAGVRQIEGTMNGLGERAGNAALEEVIMTLNVHKNSLKVSTDINIKEIHRTSKIVSQFCNTPIPLNKAIIGKNVFSHSSGIHQDGVLKNRKNYEIIDPNSIGFTDYCSLNLTSRSGRAAVKHHMKKMGYENSDYNLNELYIDFLKLADKKGRIFDYDLEALAFFKKQQNTEEYYKLEYFDVQSKLSGLSTAYIVLICGSQTNIQKATTYNGPVDAIYQALNKATLYSIVLKKFHLEANGEGKDALGKVNIIVQYKLRNFHGVGLATDIIEASAQAMVNVLNYIWKSQQVNKELERLQK.

One can recognise a Pyruvate carboxyltransferase domain in the interval 5–267; the sequence is IIIFDTTLRD…STDINIKEIH (263 aa). Asp-14, His-202, His-204, and Asn-238 together coordinate Mn(2+). Residues 393-516 are regulatory domain; the sequence is KLEYFDVQSK…VNKELERLQK (124 aa).

This sequence belongs to the alpha-IPM synthase/homocitrate synthase family. LeuA type 1 subfamily. As to quaternary structure, homodimer. Mn(2+) is required as a cofactor.

The protein resides in the cytoplasm. The enzyme catalyses 3-methyl-2-oxobutanoate + acetyl-CoA + H2O = (2S)-2-isopropylmalate + CoA + H(+). The protein operates within amino-acid biosynthesis; L-leucine biosynthesis; L-leucine from 3-methyl-2-oxobutanoate: step 1/4. Its function is as follows. Catalyzes the condensation of the acetyl group of acetyl-CoA with 3-methyl-2-oxobutanoate (2-ketoisovalerate) to form 3-carboxy-3-hydroxy-4-methylpentanoate (2-isopropylmalate). The protein is 2-isopropylmalate synthase of Buchnera aphidicola subsp. Cinara cedri (strain Cc).